A 39-amino-acid polypeptide reads, in one-letter code: Photosystem II reaction center protein J (39 aa).

Residues 9–29 (LWMVATVGGLAAGGLLILFVF) traverse the membrane as a helical segment.

This sequence belongs to the PsbJ family. PSII is composed of 1 copy each of membrane proteins PsbA, PsbB, PsbC, PsbD, PsbE, PsbF, PsbH, PsbI, PsbJ, PsbK, PsbL, PsbM, PsbT, PsbX, PsbY, PsbZ, Psb30/Ycf12, at least 3 peripheral proteins of the oxygen-evolving complex and a large number of cofactors. It forms dimeric complexes.

It localises to the plastid. Its subcellular location is the chloroplast thylakoid membrane. Functionally, one of the components of the core complex of photosystem II (PSII). PSII is a light-driven water:plastoquinone oxidoreductase that uses light energy to abstract electrons from H(2)O, generating O(2) and a proton gradient subsequently used for ATP formation. It consists of a core antenna complex that captures photons, and an electron transfer chain that converts photonic excitation into a charge separation. This Emiliania huxleyi (Coccolithophore) protein is Photosystem II reaction center protein J.